The sequence spans 213 residues: Type II restriction enzyme BamHI (213 aa).

Mg(2+)-binding residues include E77, D94, E111, and F112. E113 (proton acceptor) is an active-site residue.

As to quaternary structure, homodimer. Mg(2+) serves as cofactor.

It carries out the reaction Endonucleolytic cleavage of DNA to give specific double-stranded fragments with terminal 5'-phosphates.. In terms of biological role, a P subtype restriction enzyme that recognizes the double-stranded sequence 5'-GGATCC-3' and cleaves after G-1. The polypeptide is Type II restriction enzyme BamHI (Bacillus amyloliquefaciens (Bacillus velezensis)).